Consider the following 433-residue polypeptide: MKRVYSKIESIVGNVITVMAQNVKYGELAIVRSKDSSSLAEVIKLDRDKVSLQVYNGTIGISTADEVKFLGHPMQVTFSENLLGRIFDGAGNPKDGGPRLEDDLIEIGGPSANPAKRIVPRNMIRTGIPMIDVFNTLVESQKLPIFSVSGEPYNELLIRIALQAEVDLIILGGMGLKNDDYLTFKDYLEKGGALSRTIFFVNTANDPVVESLTVPDISLAVAEKFALQGKKVLVLLTDMTNFADAMKEIAITMEQVPSNRGYPGDLYSQLASRYEKAIDFEGAGSITILAVTTMPGDDITHPVPDNTGYITEGQYYLKGGRIEPFGSLSRLKQMVNGKTRDDHRTIMDAMIKLYASSKESIEKKAMGFNMTEWDEKLIKYSGMFESKLMDLSVNIPLEEALDLGWEILFSCFEPKETGIRTELVEKYWPQKKD.

This sequence belongs to the ATPase alpha/beta chains family.

Its function is as follows. Produces ATP from ADP in the presence of a proton gradient across the membrane. The V-type beta chain is a regulatory subunit. The sequence is that of V-type ATP synthase beta chain from Borrelia turicatae (strain 91E135).